We begin with the raw amino-acid sequence, 301 residues long: Homoserine O-acetyltransferase (301 aa).

C142 (acyl-thioester intermediate) is an active-site residue. Substrate is bound by residues K163 and S192. H235 functions as the Proton acceptor in the catalytic mechanism. Residue E237 is part of the active site. R249 serves as a coordination point for substrate.

The protein belongs to the MetA family.

It is found in the cytoplasm. The catalysed reaction is L-homoserine + acetyl-CoA = O-acetyl-L-homoserine + CoA. It participates in amino-acid biosynthesis; L-methionine biosynthesis via de novo pathway; O-acetyl-L-homoserine from L-homoserine: step 1/1. In terms of biological role, transfers an acetyl group from acetyl-CoA to L-homoserine, forming acetyl-L-homoserine. The polypeptide is Homoserine O-acetyltransferase (Bacillus subtilis (strain 168)).